Reading from the N-terminus, the 325-residue chain is Elongation factor P--(R)-beta-lysine ligase (325 aa).

76 to 78 (SPE) contributes to the substrate binding site. Residues 100–102 (RNE) and N109 contribute to the ATP site. Y118 contributes to the substrate binding site. An ATP-binding site is contributed by 244-245 (EL). E251 is a substrate binding site. Residue G300 coordinates ATP.

The protein belongs to the class-II aminoacyl-tRNA synthetase family. EpmA subfamily. In terms of assembly, homodimer.

It catalyses the reaction D-beta-lysine + L-lysyl-[protein] + ATP = N(6)-((3R)-3,6-diaminohexanoyl)-L-lysyl-[protein] + AMP + diphosphate + H(+). With EpmB is involved in the beta-lysylation step of the post-translational modification of translation elongation factor P (EF-P). Catalyzes the ATP-dependent activation of (R)-beta-lysine produced by EpmB, forming a lysyl-adenylate, from which the beta-lysyl moiety is then transferred to the epsilon-amino group of a conserved specific lysine residue in EF-P. This is Elongation factor P--(R)-beta-lysine ligase from Photorhabdus laumondii subsp. laumondii (strain DSM 15139 / CIP 105565 / TT01) (Photorhabdus luminescens subsp. laumondii).